The primary structure comprises 217 residues: Large ribosomal subunit protein uL3 (217 aa).

A compositionally biased stretch (polar residues) spans 134 to 146 (GRATHGNSRSHNV). Positions 134-154 (GRATHGNSRSHNVPGSIGMAQ) are disordered. Position 154 is an N5-methylglutamine (Gln-154).

The protein belongs to the universal ribosomal protein uL3 family. Part of the 50S ribosomal subunit. Forms a cluster with proteins L14 and L19. Post-translationally, methylated by PrmB.

One of the primary rRNA binding proteins, it binds directly near the 3'-end of the 23S rRNA, where it nucleates assembly of the 50S subunit. The chain is Large ribosomal subunit protein uL3 from Burkholderia cenocepacia (strain HI2424).